Reading from the N-terminus, the 312-residue chain is Malate dehydrogenase (312 aa).

NAD(+) contacts are provided by residues 7–13 (GAAGGIG) and Asp34. The substrate site is built by Arg81 and Arg87. NAD(+) is bound by residues Asn94 and 117 to 119 (ITN). Substrate-binding residues include Asn119 and Arg153. His177 serves as the catalytic Proton acceptor. Met228 provides a ligand contact to NAD(+).

This sequence belongs to the LDH/MDH superfamily. MDH type 1 family. In terms of assembly, homodimer.

It carries out the reaction (S)-malate + NAD(+) = oxaloacetate + NADH + H(+). Its function is as follows. Catalyzes the reversible oxidation of malate to oxaloacetate. This chain is Malate dehydrogenase, found in Mannheimia succiniciproducens (strain KCTC 0769BP / MBEL55E).